The sequence spans 363 residues: TBC1 domain family member whacked (363 aa).

Positions 77–265 (GIPKSVRPKA…RVWDCFLAEG (189 aa)) constitute a Rab-GAP TBC domain. The segment at 335 to 363 (KARRAKQKAQQEAESSGSGNGHRRNMPTL) is disordered.

The protein resides in the apical cell membrane. The protein localises to the cytoplasmic vesicle. It is found in the cell projection. Its subcellular location is the filopodium. Its function is as follows. Essential for ensuring the polarized growth of tracheal seamless tubes. During seamless tube morphogenesis, likely to act as a GTPase-activating protein (GAP) for Rab35 to regulate vesicle trafficking from the recycling endosomes to the lumenal apical membrane to ensure the polarized dynein motor complex-dependent growth of seamless tubes along the proximodistal axis in tracheal terminal cells. When the terminal branch lumen is growing, Rab35-GTP is active and likely directs the transport of apical membrane vesicles from the soma to the distal tip of elongating terminal cell branches thus providing a continuous supply of apical membrane components as the lumen grows. Whereas when Rab35-GDP is inactivated, presumably by this GAP, apical membrane vesicles are transported to a central location adjacent to the terminal cell nucleus. This chain is TBC1 domain family member whacked, found in Drosophila melanogaster (Fruit fly).